A 156-amino-acid chain; its full sequence is Small ribosomal subunit protein uS7 (156 aa).

This sequence belongs to the universal ribosomal protein uS7 family. As to quaternary structure, part of the 30S ribosomal subunit. Contacts proteins S9 and S11.

Functionally, one of the primary rRNA binding proteins, it binds directly to 16S rRNA where it nucleates assembly of the head domain of the 30S subunit. Is located at the subunit interface close to the decoding center, probably blocks exit of the E-site tRNA. The protein is Small ribosomal subunit protein uS7 of Anaeromyxobacter dehalogenans (strain 2CP-C).